We begin with the raw amino-acid sequence, 651 residues long: Acetyl-coenzyme A synthetase (651 aa).

CoA contacts are provided by residues 189–192 (RGGK), threonine 311, and asparagine 335. ATP contacts are provided by residues 387–389 (GEP), 411–416 (DTWWQT), aspartate 500, and arginine 515. A CoA-binding site is contributed by serine 523. Arginine 526 lines the ATP pocket. Valine 537, histidine 539, and valine 542 together coordinate Mg(2+). CoA is bound at residue arginine 584. At lysine 609 the chain carries N6-acetyllysine.

It belongs to the ATP-dependent AMP-binding enzyme family. Requires Mg(2+) as cofactor. Post-translationally, acetylated. Deacetylation by the SIR2-homolog deacetylase activates the enzyme.

The catalysed reaction is acetate + ATP + CoA = acetyl-CoA + AMP + diphosphate. Functionally, catalyzes the conversion of acetate into acetyl-CoA (AcCoA), an essential intermediate at the junction of anabolic and catabolic pathways. AcsA undergoes a two-step reaction. In the first half reaction, AcsA combines acetate with ATP to form acetyl-adenylate (AcAMP) intermediate. In the second half reaction, it can then transfer the acetyl group from AcAMP to the sulfhydryl group of CoA, forming the product AcCoA. This Rhizobium etli (strain ATCC 51251 / DSM 11541 / JCM 21823 / NBRC 15573 / CFN 42) protein is Acetyl-coenzyme A synthetase.